Reading from the N-terminus, the 122-residue chain is Large ribosomal subunit protein uL14 (122 aa).

Belongs to the universal ribosomal protein uL14 family. As to quaternary structure, part of the 50S ribosomal subunit. Forms a cluster with proteins L3 and L19. In the 70S ribosome, L14 and L19 interact and together make contacts with the 16S rRNA in bridges B5 and B8.

In terms of biological role, binds to 23S rRNA. Forms part of two intersubunit bridges in the 70S ribosome. In Oleidesulfovibrio alaskensis (strain ATCC BAA-1058 / DSM 17464 / G20) (Desulfovibrio alaskensis), this protein is Large ribosomal subunit protein uL14.